A 1079-amino-acid polypeptide reads, in one-letter code: Electrogenic sodium bicarbonate cotransporter 1 (1079 aa).

The segment at 1-62 is required for interaction with AHCYL1; that stretch reads MEDEAVLDRG…EKKEKERISE (62 aa). Over 1 to 466 the chain is Cytoplasmic; it reads MEDEAVLDRG…FASDFYDALN (466 aa). E2 carries the phosphoserine modification. Phosphotyrosine is present on Y30. Over residues 39–52 the composition is skewed to basic residues; it reads YRRRRRHKRKAGHK. The segment at 39–78 is disordered; it reads YRRRRRHKRKAGHKEKKEKERISENYSDKSDVENADESSS. Over residues 53–70 the composition is skewed to basic and acidic residues; sequence EKKEKERISENYSDKSDV. 7 positions are modified to phosphoserine: S61, S65, S68, S223, S232, S233, and S245. The interval 235 to 266 is disordered; that stretch reads SRMFSNPDNGSPAMTHRNLTSSSLNDISDKPE. T249 and T254 each carry phosphothreonine. Positions 251-260 are enriched in polar residues; it reads RNLTSSSLND. A phosphoserine mark is found at S256, S257, and S262. The chain crosses the membrane as a helical span at residues 467-491; that stretch reads IQALSAILFIYLATVTNAITFGGLL. Topologically, residues 492–501 are extracellular; that stretch reads GDATDNMQGV. A helical transmembrane segment spans residues 502 to 520; it reads LESFLGTAVSGAIFCLFAG. Residue Q521 is a topological domain, cytoplasmic. A discontinuously helical transmembrane segment spans residues 522-542; the sequence is PLTILSSTGPVLVFERLLFNF. The Extracellular portion of the chain corresponds to 543-550; sequence SKDHSFDY. The chain crosses the membrane as a helical span at residues 551-571; that stretch reads LEFRLWIGLWSAFMCLILVAT. Residues 572–585 are Cytoplasmic-facing; the sequence is DASFLVQYFTRFTE. Residues 586 to 609 traverse the membrane as a helical segment; that stretch reads EGFSSLISFIFIYDAFKKMIKLAD. 2 N-linked (GlcNAc) asparagine glycosylation sites follow: I597 and F617. Residues 610-692 are Extracellular-facing; the sequence is YYPINSDFRV…GNNCDFVPDI (83 aa). A helical transmembrane segment spans residues 693–710; that stretch reads TLMSFILFLGTYTSSMAM. Residues 711–725 lie on the Cytoplasmic side of the membrane; it reads KKFKTSRYFPTTARK. The helical transmembrane segment at 726-745 threads the bilayer; sequence LISDFAIILSILIFCVIDAL. The Extracellular portion of the chain corresponds to 746 to 779; the sequence is VGVDTPKLIVPSEFKPTSPHRGWFVPPFGGNPWW. Residues 748-779 form an interaction with CA4 region; the sequence is VDTPKLIVPSEFKPTSPHRGWFVPPFGGNPWW. A helical transmembrane segment spans residues 780–807; that stretch reads VCLAAAIPALLVTILIFMDQQITAVIVN. Over 808–819 the chain is Cytoplasmic; sequence RKEHKLKKGAGY. The chain crosses the membrane as a helical span at residues 820 to 836; the sequence is HLDLFWVAILMVVCSFM. Residue A837 is a topological domain, extracellular. Residues 838 to 855 traverse the membrane as a discontinuously helical segment; the sequence is LPWYVAATVISIAHIDSL. The Cytoplasmic portion of the chain corresponds to 856–877; sequence KMETETSAPGEQPKFLGVREQR. A helical transmembrane segment spans residues 878-894; the sequence is VTGTLVFILTGLSVFMA. At 895-901 the chain is on the extracellular side; the sequence is PILKFIP. The helical transmembrane segment at 902–918 threads the bilayer; that stretch reads MPVLYGVFLYMGVASLN. Over 919–960 the chain is Cytoplasmic; the sequence is GVQFMDRLKLLLMPLKHQPDFIYLRHVPLRRVHLFTSLQVLC. The discontinuously helical intramembrane region spans 961–986; that stretch reads LALLWILKSTVAAIIFPVMILALVAV. The Cytoplasmic segment spans residues 987-1079; the sequence is RKGMDYLFSQ…STFLERHTSC (93 aa). The interval 1002–1004 is CA2-binding; sequence LDD. The interval 1012–1079 is disordered; sequence KKKEDEKKKK…STFLERHTSC (68 aa). Phosphoserine occurs at positions 1026 and 1029. S1026 is subject to Phosphoserine; by PKA. Residues 1030–1033 are CA2-binding; sequence DNDD. Phosphoserine is present on residues S1034 and S1044. Residues 1057–1059 form a required for basolateral targeting region; it reads FLS. Phosphoserine occurs at positions 1060, 1064, 1069, and 1078. Basic and acidic residues predominate over residues 1062-1079; sequence KPLDRERSSTFLERHTSC.

It belongs to the anion exchanger (TC 2.A.31) family. In terms of assembly, homodimer. Interacts with CA2/carbonic anhydrase 2 and CA4/carbonic anhydrase 4 which may regulate transporter activity. Isoform 1 but not isoform 2 interacts with AHCYL1 (via PEST domain when phosphorylated); the interaction increases SLC4A4 isoform 1 activity. Interacts with AHCYL2. Phosphorylation of Ser-1026 by PKA increases the binding of CA2 and changes the Na(+):HCO3(-) stoichiometry of the transporter from 3:1 to 2:1. Phosphorylated in presence of STK39 and dephosphorylated in presence of PP1 phosphatase; phosphorylation seems to inhibit SLC4A4 activity. In terms of processing, N-glycosylation is not necessary for the transporter basic functions. In terms of tissue distribution, specifically expressed in kidney and to a lower extent in liver, lung, spleen, brain, skeletal muscle and heart. In kidney, expressed in proximal tubules at the corticomedullary junction. Isoform 2 is specifically expressed in kidney. Isoform 1 is expressed in kidney and pancreas while isoform 3 is specifically expressed in brain (at protein level). In brain, isoform 1 is expressed in astrocytes while isoform 3 is expressed in neurons (at protein level). In the eye, isoform 1 is expressed in cornea, conjunctiva, lens epithelium, ciliary bodies and retina while isoform 2 is detected only in the conjunctiva.

The protein resides in the basolateral cell membrane. It localises to the cell membrane. It carries out the reaction 2 hydrogencarbonate(out) + Na(+)(out) = 2 hydrogencarbonate(in) + Na(+)(in). It catalyses the reaction 3 hydrogencarbonate(out) + Na(+)(out) = 3 hydrogencarbonate(in) + Na(+)(in). Inhibited by 4,4'-diisothiocyanatostilbene-2,2'-disulfonic acid (DIDS). Its function is as follows. Electrogenic sodium/bicarbonate cotransporter with a Na(+):HCO3(-) stoichiometry varying from 1:2 to 1:3. May regulate bicarbonate influx/efflux at the basolateral membrane of cells and regulate intracellular pH. In Rattus norvegicus (Rat), this protein is Electrogenic sodium bicarbonate cotransporter 1 (Slc4a4).